Reading from the N-terminus, the 177-residue chain is MFYRLLFASLWYILPAYVANASACIFGGGTPVDLGKNFIDGRRLIGNGVTYRGCIFGILCGTLVGLIQGILVDFNIFNSLDFYGTVLDHVILAFFLSVGAIVGDAVGSFIKRRLNIERGKPAPLLDQLDFVIGALAFGYIVAPIPYEMIIIICLFTVFVHLLGNIIAYKLGIKDVWW.

5 helical membrane passes run 6-26 (LFAS…ACIF), 54-74 (CIFG…LVDF), 90-110 (VILA…GSFI), 124-144 (LLDQ…VAPI), and 148-168 (MIII…IIAY).

It belongs to the CDP-archaeol synthase family. Mg(2+) is required as a cofactor.

The protein localises to the cell membrane. It catalyses the reaction 2,3-bis-O-(geranylgeranyl)-sn-glycerol 1-phosphate + CTP + H(+) = CDP-2,3-bis-O-(geranylgeranyl)-sn-glycerol + diphosphate. It functions in the pathway membrane lipid metabolism; glycerophospholipid metabolism. Catalyzes the formation of CDP-2,3-bis-(O-geranylgeranyl)-sn-glycerol (CDP-archaeol) from 2,3-bis-(O-geranylgeranyl)-sn-glycerol 1-phosphate (DGGGP) and CTP. This reaction is the third ether-bond-formation step in the biosynthesis of archaeal membrane lipids. The chain is CDP-archaeol synthase from Methanocaldococcus jannaschii (strain ATCC 43067 / DSM 2661 / JAL-1 / JCM 10045 / NBRC 100440) (Methanococcus jannaschii).